Reading from the N-terminus, the 412-residue chain is Dihydrolipoyllysine-residue acetyltransferase component of pyruvate dehydrogenase complex (412 aa).

Residues 2 to 78 (PIKILMPALS…PVNSLIAVLS (77 aa)) form the Lipoyl-binding domain. K43 carries the N6-lipoyllysine modification. One can recognise a Peripheral subunit-binding (PSBD) domain in the interval 132–169 (FASPLAKRLAKMRNIRFESVKGSGPHGRIVKQDILSYT). H385 is an active-site residue.

The protein belongs to the 2-oxoacid dehydrogenase family. Forms a 24-polypeptide structural core with octahedral symmetry. The cofactor is (R)-lipoate.

The catalysed reaction is N(6)-[(R)-dihydrolipoyl]-L-lysyl-[protein] + acetyl-CoA = N(6)-[(R)-S(8)-acetyldihydrolipoyl]-L-lysyl-[protein] + CoA. In terms of biological role, the pyruvate dehydrogenase complex catalyzes the overall conversion of pyruvate to acetyl-CoA and CO(2). It contains multiple copies of three enzymatic components: pyruvate dehydrogenase (E1), dihydrolipoamide acetyltransferase (E2) and lipoamide dehydrogenase (E3). The protein is Dihydrolipoyllysine-residue acetyltransferase component of pyruvate dehydrogenase complex (pdhC) of Rickettsia conorii (strain ATCC VR-613 / Malish 7).